We begin with the raw amino-acid sequence, 1188 residues long: Probable RNA helicase armi (1188 aa).

723-730 (GPPGSGKT) provides a ligand contact to ATP. The short motif at 862–865 (DEAG) is the DEAG box element.

It belongs to the DNA2/NAM7 helicase family. SDE3 subfamily. In terms of assembly, forms a complex with piwi and fs(1)Yb; this interaction is required for proper piRNA loading and nuclear localization of piwi. The interaction of piwi and fs(1)Yb is likely to occur via armi. As to expression, abundant in oocytes and syncytial blastoderm. Expressed at low level throughout development, including somatic tissues. First apparent early in oogenesis, in the cytoplasm of stem cells and mitotically dividing cystoblasts. In regions 2a and 2b of the germarium, it is most concentrated in the center of the germline cysts, where the pro-oocyte is located. In stage 1 and early stage 2 egg chambers, it accumulates at the anterior of the oocyte, near the ring canals. It also extends through the ring canals forming a branched structure that links the early oocyte with adjacent nurse cells. In stage 3 cysts, it accumulates at the posterior cortex and localizes to extensions that pass through the oocyte into the nurse cells. Through stages 4 to 7, it continues to be somewhat enriched at the posterior cortex of the oocyte, but at significantly lower level. In stage 9 to 10 egg chambers, it is found throughout the cytoplasm of the oocyte and nurse cells, with slight enrichment at the oocyte cortex.

Its subcellular location is the cytoplasm. The enzyme catalyses ATP + H2O = ADP + phosphate + H(+). Probable RNA helicase required for axial polarization of the oocyte during early and mid oogenesis. Plays a central role in RNA interference (RNAi) process, a process that mediates mRNA destruction of translational repression. Required for the assembly of the RISC complex, a complex required for target RNA destruction or repression. May be required in the RISC assembly to unwind miRNAs, in the production of single-stranded miRNA from the double-stranded miRNA, a key step in RISC formation. Required both for the translational control of oskar (osk) mRNA and cytoskeletal polarization in the oocyte. Required for somatic primary piRNA biogenesis. Involved in repression of long interspersed nuclear elements (LINEs) including HeT-A, I-element and TART LINEs. The polypeptide is Probable RNA helicase armi (Drosophila melanogaster (Fruit fly)).